A 516-amino-acid chain; its full sequence is AMP phosphorylase (516 aa).

AMP-binding positions include glycine 169, serine 195–glycine 200, and threonine 204. The Proton donor role is filled by aspartate 257. 2 residues coordinate AMP: serine 265 and lysine 289.

This sequence belongs to the thymidine/pyrimidine-nucleoside phosphorylase family. Type 2 subfamily.

The enzyme catalyses AMP + phosphate = alpha-D-ribose 1,5-bisphosphate + adenine. The catalysed reaction is CMP + phosphate = cytosine + alpha-D-ribose 1,5-bisphosphate. It catalyses the reaction UMP + phosphate = alpha-D-ribose 1,5-bisphosphate + uracil. In terms of biological role, catalyzes the conversion of AMP and phosphate to adenine and ribose 1,5-bisphosphate (R15P). Exhibits phosphorylase activity toward CMP and UMP in addition to AMP. Functions in an archaeal AMP degradation pathway, together with R15P isomerase and RubisCO. The polypeptide is AMP phosphorylase (Methanospirillum hungatei JF-1 (strain ATCC 27890 / DSM 864 / NBRC 100397 / JF-1)).